We begin with the raw amino-acid sequence, 688 residues long: Pescadillo homolog (688 aa).

A BRCT domain is found at 351 to 470 (EVASLFASFT…KLLRHDLYAP (120 aa)). Disordered stretches follow at residues 411–442 (RPPLPESALPPLPQNPGEGAEKAPRVRPGTRM) and 496–688 (AEQE…TKGR). The segment covering 412-424 (PPLPESALPPLPQ) has biased composition (pro residues). Positions 496 to 536 (AEQESDGEAERQAEEENEEEESEVEGLSMDKEMVETENSEA) form a coiled coil. Composition is skewed to acidic residues over residues 510–519 (EENEEEESEV), 530–544 (ETENSEAGESDEESV), 554–565 (GSDDEEEESEED), and 576–589 (EAADVQSESEDDEE). Residues 619-634 (KKSKKQKPLAKKHAAQ) show a composition bias toward basic residues. Residues 627–686 (LAKKHAAQKKKEQEELERQKMMMSRKKRKLLDKMLYSNKKKDEEAEKLRRKRRKIEQGTK) adopt a coiled-coil conformation. The span at 635-646 (KKKEQEELERQK) shows a compositional bias: basic and acidic residues.

It belongs to the pescadillo family. In terms of assembly, component of the NOP7 complex, composed of ERB1, NOP7 and YTM1. The complex is held together by ERB1, which interacts with NOP7 via its N-terminal domain and with YTM1 via a high-affinity interaction between the seven-bladed beta-propeller domains of the 2 proteins. The NOP7 complex associates with the 66S pre-ribosome.

It is found in the nucleus. It localises to the nucleolus. The protein localises to the nucleoplasm. Functionally, component of the NOP7 complex, which is required for maturation of the 25S and 5.8S ribosomal RNAs and formation of the 60S ribosome. In Coccidioides immitis (strain RS) (Valley fever fungus), this protein is Pescadillo homolog.